Here is a 118-residue protein sequence, read N- to C-terminus: Non-specific lipid-transfer protein (118 aa).

The N-terminal stretch at 1 to 25 (MDCIRILWSVAVGLLLVSWRPTMFA) is a signal peptide. 4 cysteine pairs are disulfide-bonded: cysteine 30–cysteine 76, cysteine 40–cysteine 53, cysteine 54–cysteine 98, and cysteine 74–cysteine 113.

It belongs to the plant LTP family.

Functionally, plant non-specific lipid-transfer proteins transfer phospholipids as well as galactolipids across membranes. May play a role in wax or cutin deposition in the cell walls of expanding epidermal cells and certain secretory tissues. The chain is Non-specific lipid-transfer protein from Ambrosia artemisiifolia (Common ragweed).